Reading from the N-terminus, the 597-residue chain is NADH-quinone oxidoreductase subunit C/D (597 aa).

An NADH dehydrogenase I subunit C region spans residues 1 to 187; the sequence is MIDENKKKNT…ESFFLDEQKE (187 aa). Residues 211 to 597 are NADH dehydrogenase I subunit D; that stretch reads DFMFLNLGPN…IDFVMSDVDR (387 aa).

This sequence in the N-terminal section; belongs to the complex I 30 kDa subunit family. The protein in the C-terminal section; belongs to the complex I 49 kDa subunit family. NDH-1 is composed of 13 different subunits. Subunits NuoB, CD, E, F, and G constitute the peripheral sector of the complex.

It localises to the cell inner membrane. It catalyses the reaction a quinone + NADH + 5 H(+)(in) = a quinol + NAD(+) + 4 H(+)(out). In terms of biological role, NDH-1 shuttles electrons from NADH, via FMN and iron-sulfur (Fe-S) centers, to quinones in the respiratory chain. The immediate electron acceptor for the enzyme in this species is believed to be ubiquinone. Couples the redox reaction to proton translocation (for every two electrons transferred, four hydrogen ions are translocated across the cytoplasmic membrane), and thus conserves the redox energy in a proton gradient. This Buchnera aphidicola subsp. Schizaphis graminum (strain Sg) protein is NADH-quinone oxidoreductase subunit C/D.